The primary structure comprises 596 residues: Aspartate--tRNA(Asp/Asn) ligase (596 aa).

E172 is a binding site for L-aspartate. Positions 196 to 199 (QLFK) are aspartate. R218 contributes to the L-aspartate binding site. Residues 218-220 (RDE) and Q227 each bind ATP. H455 serves as a coordination point for L-aspartate. E489 serves as a coordination point for ATP. Residue R496 participates in L-aspartate binding. Position 541–544 (541–544 (GLDR)) interacts with ATP.

This sequence belongs to the class-II aminoacyl-tRNA synthetase family. Type 1 subfamily. Homodimer.

It localises to the cytoplasm. The enzyme catalyses tRNA(Asx) + L-aspartate + ATP = L-aspartyl-tRNA(Asx) + AMP + diphosphate. Aspartyl-tRNA synthetase with relaxed tRNA specificity since it is able to aspartylate not only its cognate tRNA(Asp) but also tRNA(Asn). Reaction proceeds in two steps: L-aspartate is first activated by ATP to form Asp-AMP and then transferred to the acceptor end of tRNA(Asp/Asn). The sequence is that of Aspartate--tRNA(Asp/Asn) ligase from Bordetella avium (strain 197N).